The chain runs to 223 residues: Endonuclease NucS (223 aa).

It belongs to the NucS endonuclease family.

It localises to the cytoplasm. In terms of biological role, cleaves both 3' and 5' ssDNA extremities of branched DNA structures. The polypeptide is Endonuclease NucS (Mycobacterium marinum (strain ATCC BAA-535 / M)).